Consider the following 256-residue polypeptide: Protein FixA (256 aa).

This sequence belongs to the ETF beta-subunit/FixA family. In terms of assembly, heterodimer of FixA and FixB.

It functions in the pathway amine and polyamine metabolism; carnitine metabolism. Required for anaerobic carnitine reduction. May bring reductant to CaiA. In Escherichia coli O17:K52:H18 (strain UMN026 / ExPEC), this protein is Protein FixA.